A 579-amino-acid polypeptide reads, in one-letter code: 2-isopropylmalate synthase (579 aa).

In terms of domain architecture, Pyruvate carboxyltransferase spans 40–314; it reads PRWCAVDLRD…DPMIDFSDID (275 aa). The Mg(2+) site is built by aspartate 49, histidine 253, histidine 255, and asparagine 289. The regulatory domain stretch occupies residues 456–579; that stretch reads SDEEQAQWGR…VNRAVRDAQA (124 aa).

This sequence belongs to the alpha-IPM synthase/homocitrate synthase family. LeuA type 2 subfamily. In terms of assembly, homodimer. It depends on Mg(2+) as a cofactor.

It is found in the cytoplasm. The catalysed reaction is 3-methyl-2-oxobutanoate + acetyl-CoA + H2O = (2S)-2-isopropylmalate + CoA + H(+). The protein operates within amino-acid biosynthesis; L-leucine biosynthesis; L-leucine from 3-methyl-2-oxobutanoate: step 1/4. Its function is as follows. Catalyzes the condensation of the acetyl group of acetyl-CoA with 3-methyl-2-oxobutanoate (2-ketoisovalerate) to form 3-carboxy-3-hydroxy-4-methylpentanoate (2-isopropylmalate). The sequence is that of 2-isopropylmalate synthase from Paenarthrobacter aurescens (strain TC1).